The sequence spans 370 residues: Peptidyl-prolyl cis-trans isomerase D (370 aa).

Serine 5 carries the phosphoserine modification. The region spanning 19–183 (FFDVDIGGER…KLCVIAECGE (165 aa)) is the PPIase cyclophilin-type domain. The residue at position 171 (lysine 171) is an N6-acetyllysine. The chaperone activity stretch occupies residues 185-215 (KEGDDWGIFPKDGSGDSHPDFPEDADVDLKD). Serine 198 is modified (phosphoserine). Residues 214-370 (KDVDKILLIS…EKAAYAKMFA (157 aa)) are interaction with HSP90AB1. 3 TPR repeats span residues 223–256 (SEDLKNIGNTFFKSQNWEMAIKKYTKVLRYVEGS), 273–306 (LSCVLNIGACKLKMSDWQGAVDSCLEALEIDPSN), and 307–340 (TKALYRRAQGWQGLKEYDQALADLKKAQEIAPED).

It belongs to the cyclophilin-type PPIase family. PPIase D subfamily. In terms of assembly, identified in ESR1 or NR3C1/GCR steroid receptor-chaperone complexes. Found in HSP90 chaperone complexes with kinase clients LCK or EIF2AK1. Two monomers associate with one HSP90 homodimer. Interacts with HSP90AA1. Interacts with HSP90AB1; PPID and FKBP4 compete for binding to HSP90AB1 and the interaction is mutually exclusive with the PPID:HSPA8 interaction. Interacts with HSPA8; PPID and STIP1 but not FKBP4 compete for binding to HSPA8 and the interaction is mutually exclusive with the PPID:HSP90AB1 interaction. Interacts with S100A1 and S100A2; the interactions dissociate the PPID:HSP90AA1 interaction. Interacts with S100A6. Interacts with MYB, ILF2, XRCC6, RACK1 and RPS3. Interacts with cytoplasmic dynein 1 intermediate chain (DYNC1I1 or DYNC1I2). The N-terminus is blocked. Detected in heart, thymis and brain.

It localises to the cytoplasm. Its subcellular location is the nucleus. The protein resides in the nucleolus. The protein localises to the nucleoplasm. The catalysed reaction is [protein]-peptidylproline (omega=180) = [protein]-peptidylproline (omega=0). Less sensitive to inhibition by cyclosporin A than is CYP-18. In terms of biological role, PPIase that catalyzes the cis-trans isomerization of proline imidic peptide bonds in oligopeptides and may therefore assist protein folding. Proposed to act as a co-chaperone in HSP90 complexes such as in unligated steroid receptors heterocomplexes. Different co-chaperones seem to compete for association with HSP90 thus establishing distinct HSP90-co-chaperone-receptor complexes with the potential to exert tissue-specific receptor activity control. May have a preference for estrogen receptor complexes and is not found in glucocorticoid receptor complexes. May be involved in cytoplasmic dynein-dependent movement of the receptor from the cytoplasm to the nucleus. May regulate MYB by inhibiting its DNA-binding activity. Involved in regulation of AHR signaling by promoting the formation of the AHR:ARNT dimer; the function is independent of HSP90 but requires the chaperone activity. Involved in regulation of UV radiation-induced apoptosis. This chain is Peptidyl-prolyl cis-trans isomerase D, found in Bos taurus (Bovine).